Here is a 164-residue protein sequence, read N- to C-terminus: Transcriptional repressor NrdR (164 aa).

The segment at 3-34 (CPKCNYNKSSVVDSRQAEDGNTIRRRRECEKC) is a zinc-finger region. The ATP-cone domain maps to 49–139 (LLVVKKDGTR…VYKSFKDVDE (91 aa)).

It belongs to the NrdR family. The cofactor is Zn(2+).

Negatively regulates transcription of bacterial ribonucleotide reductase nrd genes and operons by binding to NrdR-boxes. The polypeptide is Transcriptional repressor NrdR (Streptococcus uberis (strain ATCC BAA-854 / 0140J)).